Reading from the N-terminus, the 487-residue chain is UDP-N-acetylmuramoyl-L-alanyl-D-glutamate--2,6-diaminopimelate ligase (487 aa).

Residues L23 and S25 each contribute to the UDP-N-acetyl-alpha-D-muramoyl-L-alanyl-D-glutamate site. 108-114 (GTNGKTS) is an ATP binding site. UDP-N-acetyl-alpha-D-muramoyl-L-alanyl-D-glutamate is bound by residues 150–151 (TT), S177, Q183, and R185. K217 bears the N6-carboxylysine mark. Meso-2,6-diaminopimelate is bound by residues R378, 402 to 405 (DNPR), G453, and E457. The short motif at 402–405 (DNPR) is the Meso-diaminopimelate recognition motif element.

It belongs to the MurCDEF family. MurE subfamily. It depends on Mg(2+) as a cofactor. In terms of processing, carboxylation is probably crucial for Mg(2+) binding and, consequently, for the gamma-phosphate positioning of ATP.

The protein localises to the cytoplasm. The enzyme catalyses UDP-N-acetyl-alpha-D-muramoyl-L-alanyl-D-glutamate + meso-2,6-diaminopimelate + ATP = UDP-N-acetyl-alpha-D-muramoyl-L-alanyl-gamma-D-glutamyl-meso-2,6-diaminopimelate + ADP + phosphate + H(+). It participates in cell wall biogenesis; peptidoglycan biosynthesis. Its function is as follows. Catalyzes the addition of meso-diaminopimelic acid to the nucleotide precursor UDP-N-acetylmuramoyl-L-alanyl-D-glutamate (UMAG) in the biosynthesis of bacterial cell-wall peptidoglycan. This Pseudomonas aeruginosa (strain ATCC 15692 / DSM 22644 / CIP 104116 / JCM 14847 / LMG 12228 / 1C / PRS 101 / PAO1) protein is UDP-N-acetylmuramoyl-L-alanyl-D-glutamate--2,6-diaminopimelate ligase.